The sequence spans 542 residues: Membrane protein insertase YidC (542 aa).

The next 5 helical transmembrane spans lie at 7–27 (LLVM…QQDF), 338–358 (FALL…IIGV), 417–437 (MGGC…YWTF), 455–475 (LSAQ…MFLL), and 494–514 (FMPV…VLYW).

The protein belongs to the OXA1/ALB3/YidC family. Type 1 subfamily. In terms of assembly, interacts with the Sec translocase complex via SecD. Specifically interacts with transmembrane segments of nascent integral membrane proteins during membrane integration.

The protein localises to the cell inner membrane. Required for the insertion and/or proper folding and/or complex formation of integral membrane proteins into the membrane. Involved in integration of membrane proteins that insert both dependently and independently of the Sec translocase complex, as well as at least some lipoproteins. Aids folding of multispanning membrane proteins. The protein is Membrane protein insertase YidC of Actinobacillus pleuropneumoniae serotype 3 (strain JL03).